The chain runs to 1220 residues: DNA-directed RNA polymerase subunit beta (1220 aa).

Belongs to the RNA polymerase beta chain family. The RNAP catalytic core consists of 2 alpha, 1 beta, 1 beta' and 1 omega subunit. When a sigma factor is associated with the core the holoenzyme is formed, which can initiate transcription.

The enzyme catalyses RNA(n) + a ribonucleoside 5'-triphosphate = RNA(n+1) + diphosphate. Functionally, DNA-dependent RNA polymerase catalyzes the transcription of DNA into RNA using the four ribonucleoside triphosphates as substrates. This is DNA-directed RNA polymerase subunit beta from Mesomycoplasma hyopneumoniae (strain 7448) (Mycoplasma hyopneumoniae).